A 376-amino-acid chain; its full sequence is Thymidine kinase (376 aa).

The disordered stretch occupies residues 1 to 38; the sequence is MASYPCHQHASAFDQAARSRGHNNRRTALRPRRQQKAT. The segment covering 19–35 has biased composition (basic residues); the sequence is SRGHNNRRTALRPRRQQ. 56-63 serves as a coordination point for ATP; it reads GPHGMGKT. Glu-83 functions as the Proton acceptor in the catalytic mechanism. Substrate-binding residues include Tyr-101 and Gln-125. Arg-216 lines the ATP pocket. Arg-222 contributes to the substrate binding site.

Belongs to the herpesviridae thymidine kinase family. Homodimer.

The enzyme catalyses thymidine + ATP = dTMP + ADP + H(+). In terms of biological role, catalyzes the transfer of the gamma-phospho group of ATP to thymidine to generate dTMP in the salvage pathway of pyrimidine synthesis. The dTMP serves as a substrate for DNA polymerase during viral DNA replication. Allows the virus to be reactivated and to grow in non-proliferative cells lacking a high concentration of phosphorylated nucleic acid precursors. The polypeptide is Thymidine kinase (Homo sapiens (Human)).